The sequence spans 523 residues: Cytoplasmic dynein 1 light intermediate chain 1 (523 aa).

Residues 1-25 (MAAVGRVGSFGSSPPGLSSTYTGGP) form a disordered region. Residues 9-19 (SFGSSPPGLSS) show a composition bias toward low complexity. 74–81 (GEDGAGKT) contributes to the ATP binding site. Serine 207 carries the phosphoserine modification. A Phosphothreonine modification is found at threonine 213. 2 disordered regions span residues 387–434 (PPTA…DPNM) and 456–523 (TGSP…GEAS). Phosphoserine occurs at positions 398 and 405. At threonine 408 the chain carries Phosphothreonine. Phosphoserine occurs at positions 412, 419, 421, and 427. Over residues 412–421 (SVSSNVASVS) the composition is skewed to low complexity. A compositionally biased stretch (gly residues) spans 458-478 (SPGGPGVSGGSPAGGAGGGSS). A Phosphoserine modification is found at serine 487. Over residues 493-503 (LDVHAELDRIT) the composition is skewed to basic and acidic residues. Low complexity predominate over residues 506 to 523 (PVTVSPTTPTSPTEGEAS). Position 510 is a phosphoserine (serine 510). Phosphothreonine is present on residues threonine 512, threonine 513, and threonine 515. Position 516 is a phosphoserine (serine 516).

It belongs to the dynein light intermediate chain family. In terms of assembly, homodimer. The cytoplasmic dynein 1 complex consists of two catalytic heavy chains (HCs) and a number of non-catalytic subunits presented by intermediate chains (ICs), light intermediate chains (LICs) and light chains (LCs); the composition seems to vary in respect to the IC, LIC and LC composition. The heavy chain homodimer serves as a scaffold for the probable homodimeric assembly of the respective non-catalytic subunits. The ICs and LICs bind directly to the HC dimer and the LCs assemble on the IC dimer. Self-associates. Interacts with DYNC1H1; DYNC1LI1 and DYNC1LI2 bind mutually exclusive to DYNC1H1. Interacts with PCNT. Forms a complex with RAB11FIP3 and RAB11A1; the interaction between DYNC1LI1 and RAB11FIP3 is direct and induces DYNC1LI1 localization onto endosomal membrane; the complex regulates endocytic trafficking. Interacts with RUFY3. (Microbial infection) Interacts with human adenovirus 5 hexon protein; this interaction probably allows virus intracellular transport. In terms of processing, phosphorylated during mitosis but not in interphase.

It localises to the cytoplasm. Its subcellular location is the chromosome. It is found in the centromere. The protein localises to the kinetochore. The protein resides in the cytoskeleton. It localises to the spindle pole. Its subcellular location is the recycling endosome membrane. Acts as one of several non-catalytic accessory components of the cytoplasmic dynein 1 complex that are thought to be involved in linking dynein to cargos and to adapter proteins that regulate dynein function. Cytoplasmic dynein 1 acts as a motor for the intracellular retrograde motility of vesicles and organelles along microtubules. May play a role in binding dynein to membranous organelles or chromosomes. Probably involved in the microtubule-dependent transport of pericentrin. Is required for progress through the spindle assembly checkpoint. The phosphorylated form appears to be involved in the selective removal of MAD1L1 and MAD1L2 but not BUB1B from kinetochores. Forms a functional Rab11/RAB11FIP3/dynein complex onto endosomal membrane that regulates the movement of peripheral sorting endosomes (SE) along microtubule tracks toward the microtubule organizing center/centrosome, generating the endosomal recycling compartment (ERC). This is Cytoplasmic dynein 1 light intermediate chain 1 (DYNC1LI1) from Homo sapiens (Human).